The sequence spans 263 residues: Neurogenin-2 (263 aa).

The tract at residues 20–76 (LGSASPASATLTPMSSSADEEEDEELRRPGSARGQRGAEAEQGVQGSPASGAGGCRP) is disordered. The segment covering 24–36 (SPASATLTPMSSS) has biased composition (polar residues). The region spanning 112 to 164 (TRRLKANNRERNRMHNLNAALDALREVLPTFPEDAKLTKIETLRFAHNYIWAL) is the bHLH domain. Low complexity predominate over residues 197-231 (LGASGDSPSPPSSWSCTNSPASSSNSTSPYSCTLS). The segment at 197–253 (LGASGDSPSPPSSWSCTNSPASSSNSTSPYSCTLSPASPGSDVDYWQPPPPEKHRYA) is disordered.

As to quaternary structure, efficient DNA binding requires dimerization with another bHLH protein.

The protein resides in the nucleus. Functionally, transcriptional regulator. Involved in neuronal differentiation. Activates transcription by binding to the E box (5'-CANNTG-3'). The polypeptide is Neurogenin-2 (Neurog2) (Mus musculus (Mouse)).